We begin with the raw amino-acid sequence, 709 residues long: Elongation factor G (709 aa).

The region spanning 9–295 is the tr-type G domain; that stretch reads AKVRNIGIMA…AVVRYLPTPL (287 aa). GTP is bound by residues 18–25, 86–90, and 140–143; these read AHIDAGKT, DTPGH, and NKLD.

The protein belongs to the TRAFAC class translation factor GTPase superfamily. Classic translation factor GTPase family. EF-G/EF-2 subfamily.

It localises to the cytoplasm. In terms of biological role, catalyzes the GTP-dependent ribosomal translocation step during translation elongation. During this step, the ribosome changes from the pre-translocational (PRE) to the post-translocational (POST) state as the newly formed A-site-bound peptidyl-tRNA and P-site-bound deacylated tRNA move to the P and E sites, respectively. Catalyzes the coordinated movement of the two tRNA molecules, the mRNA and conformational changes in the ribosome. The chain is Elongation factor G from Streptomyces avermitilis (strain ATCC 31267 / DSM 46492 / JCM 5070 / NBRC 14893 / NCIMB 12804 / NRRL 8165 / MA-4680).